A 365-amino-acid chain; its full sequence is Alternative oxidase 2, mitochondrial (365 aa).

The span at 32-46 shows a compositional bias: low complexity; that stretch reads TPPHSTTTTSPSSPA. The disordered stretch occupies residues 32 to 52; that stretch reads TPPHSTTTTSPSSPAFHQPNH. 3 residues coordinate Fe cation: E166, E205, and H208. Residues 220–242 traverse the membrane as a helical segment; that stretch reads WFTRSIIYVGQGVFTNVFFLLYL. Residues E256, E257, E312, and H315 each coordinate Fe cation. Residues 345–365 form a disordered region; it reads QPNHGINVMRPTGWEKQDLQL.

It belongs to the alternative oxidase family. Fe cation is required as a cofactor.

The protein resides in the mitochondrion inner membrane. Catalyzes cyanide-resistant oxygen consumption. May increase respiration when the cytochrome respiratory pathway is restricted, or in response to low temperatures. The chain is Alternative oxidase 2, mitochondrial (AOX2) from Candida albicans (Yeast).